The following is a 98-amino-acid chain: MSCYDLCRPCGPTPLANSCNEPCVRQCQDSRVIIEPSPVVVTLPGPILSSFPQNTAVGSTTSAAVGSILSAEGVPISSGGFSLSGLGGRYSGRRCLPC.

An N-acetylserine modification is found at Ser2.

The protein belongs to the avian keratin family. In terms of assembly, the avian keratins (F-ker, S-ker, C-ker and B-ker) are a complex mixture of very similar polypeptides.

This chain is Feather beta keratin, found in Mycteria americana (Wood stork).